The primary structure comprises 704 residues: Polyribonucleotide nucleotidyltransferase (704 aa).

The Mg(2+) site is built by D487 and D493. Residues 554–613 (PRLLTIKIHPDKIREVIGKGGSTIQAITKETGTQIDIQDDGTIIIASVNAIAAQAAKSRI) form the KH domain. One can recognise an S1 motif domain in the interval 623–691 (GRIYEGKVAK…KQGRIRLSIK (69 aa)).

It belongs to the polyribonucleotide nucleotidyltransferase family. In terms of assembly, component of the RNA degradosome, which is a multiprotein complex involved in RNA processing and mRNA degradation. Mg(2+) is required as a cofactor.

It localises to the cytoplasm. The enzyme catalyses RNA(n+1) + phosphate = RNA(n) + a ribonucleoside 5'-diphosphate. Its function is as follows. Involved in mRNA degradation. Catalyzes the phosphorolysis of single-stranded polyribonucleotides processively in the 3'- to 5'-direction. This is Polyribonucleotide nucleotidyltransferase from Xanthomonas campestris pv. campestris (strain 8004).